The primary structure comprises 158 residues: 3-hydroxyacyl-[acyl-carrier-protein] dehydratase FabZ (158 aa).

H62 is an active-site residue.

This sequence belongs to the thioester dehydratase family. FabZ subfamily.

It localises to the cytoplasm. The enzyme catalyses a (3R)-hydroxyacyl-[ACP] = a (2E)-enoyl-[ACP] + H2O. Its function is as follows. Involved in unsaturated fatty acids biosynthesis. Catalyzes the dehydration of short chain beta-hydroxyacyl-ACPs and long chain saturated and unsaturated beta-hydroxyacyl-ACPs. This Novosphingobium aromaticivorans (strain ATCC 700278 / DSM 12444 / CCUG 56034 / CIP 105152 / NBRC 16084 / F199) protein is 3-hydroxyacyl-[acyl-carrier-protein] dehydratase FabZ.